We begin with the raw amino-acid sequence, 325 residues long: Plasminogen (325 aa).

Kringle domains are found at residues 80-146 (ACVK…VPSC) and 159-217 (LTPA…VLSV). Disulfide bonds link C81/C146, C102/C135, C124/C141, and C188/C212.

Belongs to the peptidase S1 family. Plasminogen subfamily.

Its subcellular location is the secreted. The enzyme catalyses Preferential cleavage: Lys-|-Xaa &gt; Arg-|-Xaa, higher selectivity than trypsin. Converts fibrin into soluble products.. Functionally, plasmin dissolves the fibrin of blood clots and acts as a proteolytic factor in a variety of other processes including embryonic development, tissue remodeling, tumor invasion, and inflammation. The polypeptide is Plasminogen (Petromyzon marinus (Sea lamprey)).